A 272-amino-acid polypeptide reads, in one-letter code: Alcohol dehydrogenase-related 31 kDa protein (272 aa).

Residue Tyr-11 to Leu-34 coordinates NAD(+). A substrate-binding site is contributed by Ser-139. Tyr-152 functions as the Proton acceptor in the catalytic mechanism.

The protein belongs to the short-chain dehydrogenases/reductases (SDR) family.

The chain is Alcohol dehydrogenase-related 31 kDa protein (Adhr) from Drosophila teissieri (Fruit fly).